We begin with the raw amino-acid sequence, 126 residues long: Aspartate 1-decarboxylase (126 aa).

Ser-25 (schiff-base intermediate with substrate; via pyruvic acid) is an active-site residue. Ser-25 carries the post-translational modification Pyruvic acid (Ser). Position 57 (Thr-57) interacts with substrate. Catalysis depends on Tyr-58, which acts as the Proton donor. 73–75 (GAA) contacts substrate.

Belongs to the PanD family. As to quaternary structure, heterooctamer of four alpha and four beta subunits. The cofactor is pyruvate. In terms of processing, is synthesized initially as an inactive proenzyme, which is activated by self-cleavage at a specific serine bond to produce a beta-subunit with a hydroxyl group at its C-terminus and an alpha-subunit with a pyruvoyl group at its N-terminus.

It localises to the cytoplasm. It carries out the reaction L-aspartate + H(+) = beta-alanine + CO2. The protein operates within cofactor biosynthesis; (R)-pantothenate biosynthesis; beta-alanine from L-aspartate: step 1/1. Functionally, catalyzes the pyruvoyl-dependent decarboxylation of aspartate to produce beta-alanine. The protein is Aspartate 1-decarboxylase of Acetivibrio thermocellus (strain ATCC 27405 / DSM 1237 / JCM 9322 / NBRC 103400 / NCIMB 10682 / NRRL B-4536 / VPI 7372) (Clostridium thermocellum).